The primary structure comprises 875 residues: Alanine--tRNA ligase (875 aa).

Residues histidine 564, histidine 568, cysteine 666, and histidine 670 each coordinate Zn(2+).

This sequence belongs to the class-II aminoacyl-tRNA synthetase family. Homotetramer. It depends on Zn(2+) as a cofactor.

The protein resides in the cytoplasm. It catalyses the reaction tRNA(Ala) + L-alanine + ATP = L-alanyl-tRNA(Ala) + AMP + diphosphate. Catalyzes the attachment of alanine to tRNA(Ala) in a two-step reaction: alanine is first activated by ATP to form Ala-AMP and then transferred to the acceptor end of tRNA(Ala). Also edits incorrectly charged Ser-tRNA(Ala) and Gly-tRNA(Ala) via its editing domain. The polypeptide is Alanine--tRNA ligase (Enterobacter sp. (strain 638)).